A 471-amino-acid polypeptide reads, in one-letter code: Cysteine--tRNA ligase (471 aa).

C29 contacts Zn(2+). The 'HIGH' region motif lies at 31–41; that stretch reads PTVYDYFHIGN. Zn(2+) is bound by residues C212, H237, and E241. The short motif at 269-273 is the 'KMSKS' region element; the sequence is KMSKS. An ATP-binding site is contributed by K272.

The protein belongs to the class-I aminoacyl-tRNA synthetase family. As to quaternary structure, monomer. Requires Zn(2+) as cofactor.

The protein localises to the cytoplasm. The catalysed reaction is tRNA(Cys) + L-cysteine + ATP = L-cysteinyl-tRNA(Cys) + AMP + diphosphate. The chain is Cysteine--tRNA ligase from Symbiobacterium thermophilum (strain DSM 24528 / JCM 14929 / IAM 14863 / T).